The chain runs to 211 residues: Small ribosomal subunit protein uS3 (211 aa).

The KH type-2 domain occupies 16-85; that stretch reads IDEYFKGKLV…NPQIEVKPLE (70 aa).

Belongs to the universal ribosomal protein uS3 family. Part of the 30S ribosomal subunit.

In terms of biological role, binds the lower part of the 30S subunit head. The chain is Small ribosomal subunit protein uS3 from Methanococcus vannielii (strain ATCC 35089 / DSM 1224 / JCM 13029 / OCM 148 / SB).